Reading from the N-terminus, the 334-residue chain is MIVIPRYTIIKEKASFRIQEILDNLNLKNPLVITGKNTQKYNKDFDFIYYDEIETSDLENIKNYANDYDSVIGIGGGRPIDIGKLIAHKSKKPFLSVPTTASNDGIASPIVSLTQPSYMTEAPIAIIADIDIIKKSPKKLLSAGMGDIVSNITAVLDWELGKIEKSEKYSDSSGIFSKTIAIELMDYVLNSNLEEYPKKLVKALIGSGISIAIAHSSRPASGSEHLFSHALDTMKEKYSIDTNSLHGEQCGVGTLATAQIYLEEGKLEVETFEMLKTSLKVVDAPVTAKQLGFDEEIVIEALSSAHALRNRHTILRNGISKEKAREILEKSEII.

Residues 77–81 and 99–102 each bind NAD(+); these read GRPID and TTAS. Aspartate 104 lines the substrate pocket. Residue serine 108 coordinates NAD(+). Substrate is bound at residue aspartate 147. Positions 147 and 225 each coordinate Zn(2+). Substrate is bound at residue histidine 229. Histidine 246 contacts Zn(2+).

Belongs to the glycerol-1-phosphate dehydrogenase family. It depends on Zn(2+) as a cofactor.

Its subcellular location is the cytoplasm. It carries out the reaction sn-glycerol 1-phosphate + NAD(+) = dihydroxyacetone phosphate + NADH + H(+). The catalysed reaction is sn-glycerol 1-phosphate + NADP(+) = dihydroxyacetone phosphate + NADPH + H(+). It participates in membrane lipid metabolism; glycerophospholipid metabolism. Functionally, catalyzes the NAD(P)H-dependent reduction of dihydroxyacetonephosphate (DHAP or glycerone phosphate) to glycerol 1-phosphate (G1P). The G1P thus generated is used as the glycerophosphate backbone of phospholipids in the cellular membranes of Archaea. The sequence is that of Glycerol-1-phosphate dehydrogenase [NAD(P)+] from Methanococcus maripaludis (strain DSM 14266 / JCM 13030 / NBRC 101832 / S2 / LL).